The sequence spans 395 residues: Axin-like protein 1 (395 aa).

The region spanning 4 to 132 (RSKTFSDRIL…TTTADVSNTW (129 aa)) is the RGS domain. Positions 190-230 (QETKNSSETEEEKKKERSADPYGSDGFAPPPQSTQTHTLRN) are disordered. The segment covering 194-208 (NSSETEEEKKKERSA) has biased composition (basic and acidic residues). The DIX domain maps to 301–386 (EIQKLTVELR…RITAICRMCP (86 aa)).

In terms of assembly, interacts with bar-1, dsh-2, gsk-3, and mig-5.

In terms of biological role, works in parallel with pry-1 in negatively regulating bar-1 signaling in vulval precursor cells and Q neuroblasts. Shown to have a role in excretory cell development. The polypeptide is Axin-like protein 1 (axl-1) (Caenorhabditis briggsae).